A 124-amino-acid polypeptide reads, in one-letter code: Histone H2B 1/2 (124 aa).

The disordered stretch occupies residues methionine 1–arginine 32. N6-acetyllysine occurs at positions 6 and 11. The segment covering alanine 8–valine 17 has biased composition (basic residues). Serine 13 carries the phosphoserine modification. N6-acetyllysine occurs at positions 14 and 19. An O-linked (GlcNAc) serine glycan is attached at serine 111. A Glycyl lysine isopeptide (Lys-Gly) (interchain with G-Cter in ubiquitin) cross-link involves residue lysine 119.

The protein belongs to the histone H2B family. The nucleosome is a histone octamer containing two molecules each of H2A, H2B, H3 and H4 assembled in one H3-H4 heterotetramer and two H2A-H2B heterodimers. The octamer wraps approximately 147 bp of DNA. Monoubiquitination of Lys-119 by the BRE1 gives a specific tag for epigenetic transcriptional activation and is also prerequisite for histone H3 'Lys-4' and 'Lys-79' methylation. Post-translationally, phosphorylated during apoptosis; which facilitates apoptotic chromatin condensation. In terms of processing, glcNAcylation at Ser-111 promotes monoubiquitination of Lys-119. It fluctuates in response to extracellular glucose, and associates with transcribed genes.

The protein resides in the nucleus. The protein localises to the chromosome. Its function is as follows. Core component of nucleosome. Nucleosomes wrap and compact DNA into chromatin, limiting DNA accessibility to the cellular machineries which require DNA as a template. Histones thereby play a central role in transcription regulation, DNA repair, DNA replication and chromosomal stability. DNA accessibility is regulated via a complex set of post-translational modifications of histones, also called histone code, and nucleosome remodeling. This is Histone H2B 1/2 from Danio rerio (Zebrafish).